The sequence spans 788 residues: Auxin response factor 4 (788 aa).

A compositionally biased stretch (acidic residues) spans 1-19; sequence MEFDLNTEIAEVEEEENDD. The tract at residues 1–53 is disordered; sequence MEFDLNTEIAEVEEEENDDVGVGVGGGTRIDKGRLGISPSSSSSCSSGSSSSS. The segment covering 38 to 53 has biased composition (low complexity); the sequence is SPSSSSSCSSGSSSSS. A DNA-binding region (TF-B3) is located at residues 177-279; that stretch reads FCKTLTASDT…ELRLGIRRAA (103 aa). Residues 413–433 are disordered; it reads LSIQSSPRPKRPWAGLLDTTP. One can recognise a PB1 domain in the interval 665 to 747; sequence RICTKVHKQG…VVWKIHLYTK (83 aa).

Belongs to the ARF family. As to quaternary structure, homodimers and heterodimers. In terms of tissue distribution, expressed in the whole plant.

It localises to the nucleus. In terms of biological role, auxin response factors (ARFs) are transcriptional factors that bind specifically to the DNA sequence 5'-TGTCTC-3' found in the auxin-responsive promoter elements (AuxREs). Could act as transcriptional activator or repressor. Formation of heterodimers with Aux/IAA proteins may alter their ability to modulate early auxin response genes expression. The polypeptide is Auxin response factor 4 (ARF4) (Arabidopsis thaliana (Mouse-ear cress)).